Reading from the N-terminus, the 322-residue chain is Exosome complex component RRP4 homolog (322 aa).

The S1 motif domain maps to 94–172; that stretch reads GDIVVGRVIE…HDGSLQLQAR (79 aa). Residues 182–237 form the KH domain; it reads GQLLKVDPYLVKRSKHHFHYVESLGIDLIIGCNGFIWVGEHVEVRDPMAIDDQKDE.

The protein belongs to the RRP4 family. Component of the RNA exosome complex. Interacts with RPP41. Expressed in roots, stems, rosette and cauline leaves, flowers and siliques.

It is found in the cytoplasm. Its subcellular location is the nucleus. It localises to the nucleolus. Functionally, non-catalytic component of the RNA exosome complex which has 3'-&gt;5' exoribonuclease activity and participates in a multitude of cellular RNA processing, maturation and degradation events. In vitro, is an active and distributive 3'-&gt;5' exonuclease requiring a free 3'-OH on the substrate and releasing nucleoside 5'-monophosphates. Required for normal embryo development. This chain is Exosome complex component RRP4 homolog, found in Arabidopsis thaliana (Mouse-ear cress).